The following is a 378-amino-acid chain: tRNA-specific 2-thiouridylase MnmA (378 aa).

Residues Gly-9 to Ser-16 and Met-35 each bind ATP. The interaction with target base in tRNA stretch occupies residues Asn-94–Asp-96. The active-site Nucleophile is the Cys-99. Cys-99 and Cys-195 are oxidised to a cystine. Residue Gly-123 coordinates ATP. Positions Lys-145 to Gln-147 are interaction with tRNA. The active-site Cysteine persulfide intermediate is Cys-195. An interaction with tRNA region spans residues Arg-307 to Tyr-308.

It belongs to the MnmA/TRMU family.

The protein localises to the cytoplasm. The catalysed reaction is S-sulfanyl-L-cysteinyl-[protein] + uridine(34) in tRNA + AH2 + ATP = 2-thiouridine(34) in tRNA + L-cysteinyl-[protein] + A + AMP + diphosphate + H(+). Its function is as follows. Catalyzes the 2-thiolation of uridine at the wobble position (U34) of tRNA, leading to the formation of s(2)U34. The chain is tRNA-specific 2-thiouridylase MnmA from Xanthomonas oryzae pv. oryzae (strain PXO99A).